The sequence spans 219 residues: Cytidylate kinase (219 aa).

Residue 21–29 (GPAASGKGT) coordinates ATP.

This sequence belongs to the cytidylate kinase family. Type 1 subfamily.

The protein resides in the cytoplasm. The catalysed reaction is CMP + ATP = CDP + ADP. It carries out the reaction dCMP + ATP = dCDP + ADP. The chain is Cytidylate kinase from Rickettsia akari (strain Hartford).